We begin with the raw amino-acid sequence, 99 residues long: A-type ATP synthase subunit F (99 aa).

It belongs to the V-ATPase F subunit family. In terms of assembly, has multiple subunits with at least A(3), B(3), C, D, E, F, H, I and proteolipid K(x).

The protein resides in the cell membrane. Its function is as follows. Component of the A-type ATP synthase that produces ATP from ADP in the presence of a proton gradient across the membrane. In Methanococcus aeolicus (strain ATCC BAA-1280 / DSM 17508 / OCM 812 / Nankai-3), this protein is A-type ATP synthase subunit F.